The primary structure comprises 398 residues: ATP-dependent RNA helicase RhlB (398 aa).

Residues 9–37 (TRFHDFKLSNELMHAIHDLGFPYCTPIQA) carry the Q motif motif. Positions 40–220 (LGYTLRGQDA…KQWTTNPAIV (181 aa)) constitute a Helicase ATP-binding domain. Position 53 to 60 (53 to 60 (AQTGTGKT)) interacts with ATP. The DEAD box motif lies at 166-169 (DEAD). The region spanning 243–393 (DKYKLLYNLV…MPPDELLKPV (151 aa)) is the Helicase C-terminal domain.

Belongs to the DEAD box helicase family. RhlB subfamily. Component of the RNA degradosome, which is a multiprotein complex involved in RNA processing and mRNA degradation.

Its subcellular location is the cytoplasm. It carries out the reaction ATP + H2O = ADP + phosphate + H(+). Functionally, DEAD-box RNA helicase involved in RNA degradation. Has RNA-dependent ATPase activity and unwinds double-stranded RNA. This chain is ATP-dependent RNA helicase RhlB, found in Pseudomonas putida (strain ATCC 47054 / DSM 6125 / CFBP 8728 / NCIMB 11950 / KT2440).